Reading from the N-terminus, the 446-residue chain is Cytochrome P450 monooxygenase ptmP (446 aa).

Residues 19 to 39 form a helical membrane-spanning segment; it reads VTVIWILMALVLLAYLILPNP. Position 385 (Cys385) interacts with heme. A glycan (N-linked (GlcNAc...) asparagine) is linked at Asn430.

Belongs to the cytochrome P450 family. The cofactor is heme.

It is found in the membrane. It participates in secondary metabolite biosynthesis. Its function is as follows. Cytochrome P450 monooxygenase; part of the gene cluster that mediates the biosynthesis of the indole diterpenes penitrems. The geranylgeranyl diphosphate (GGPP) synthase ptmG catalyzes the first step in penitrem biosynthesis via conversion of farnesyl pyrophosphate and isopentyl pyrophosphate into geranylgeranyl pyrophosphate (GGPP). Condensation of indole-3-glycerol phosphate with GGPP by the prenyl transferase ptmC then forms 3-geranylgeranylindole (3-GGI). Epoxidation by the FAD-dependent monooxygenase ptmM leads to a epoxidized-GGI that is substrate of the terpene cyclase ptmB for cyclization to yield paspaline. Paspaline is subsequently converted to 13-desoxypaxilline by the cytochrome P450 monooxygenase ptmP, the latter being then converted to paxilline by the cytochrome P450 monooxygenase ptmQ. Paxilline is converted to beta-paxitriol via C-10 ketoreduction by the short-chain dehydrogenase ptmH which can be monoprenylated at the C-20 by the indole diterpene prenyltransferase ptmD. A two-step elimination (acetylation and elimination) process performed by the O-acetyltransferase ptmV and ptmI leads to the production of the prenylated form of penijanthine. The FAD-linked oxidoreductase ptmO then converts the prenylated form of penijanthine into PC-M5 which is in turn transformed into PC-M4 by the aromatic dimethylallyltransferase ptmE. Five sequential oxidative transformations performed by the cytochrome P450 monooxygenases ptmK, ptmU, ptmL, ptmN and ptmJ yield the various penitrem compounds. PtmK, ptmU and ptmM are involved in the formation of the key bicyclic ring of penitrem C via the formation of the intermediates secopenitrem D and penitrem D. PtmL catalyzes the epoxidation of penitrem D and C to yield penitrem B and F, respectively. PtmJ catalyzes the last benzylic hydroxylation to convert penitrem B to prenitrem E and penitrem F to penitrem A. The protein is Cytochrome P450 monooxygenase ptmP of Penicillium ochrochloron.